Reading from the N-terminus, the 361-residue chain is tRNA-specific 2-thiouridylase MnmA (361 aa).

ATP is bound by residues 6 to 13 (LVSGGVDS) and I32. The interaction with target base in tRNA stretch occupies residues 93 to 95 (NPD). C98 functions as the Nucleophile in the catalytic mechanism. C98 and C193 form a disulfide bridge. G121 is a binding site for ATP. The interaction with tRNA stretch occupies residues 143–145 (KDQ). C193 functions as the Cysteine persulfide intermediate in the catalytic mechanism.

It belongs to the MnmA/TRMU family.

It localises to the cytoplasm. The catalysed reaction is S-sulfanyl-L-cysteinyl-[protein] + uridine(34) in tRNA + AH2 + ATP = 2-thiouridine(34) in tRNA + L-cysteinyl-[protein] + A + AMP + diphosphate + H(+). Its function is as follows. Catalyzes the 2-thiolation of uridine at the wobble position (U34) of tRNA, leading to the formation of s(2)U34. The protein is tRNA-specific 2-thiouridylase MnmA of Porphyromonas gingivalis (strain ATCC BAA-308 / W83).